Here is a 1704-residue protein sequence, read N- to C-terminus: Nonribosomal peptide synthetase ivoA (1704 aa).

Residues 234 to 620 form an adenylation region; that stretch reads EEQAIARPDQ…HGRKDLEVKI (387 aa). The Carrier domain occupies 748–827; sequence NLISDPSDSM…EMATKTSAVE (80 aa). Residue serine 785 is modified to O-(pantetheine 4'-phosphoryl)serine. The segment at 840 to 1266 is epimerization (E) domain; sequence FPLSPVQQMY…QELLETAVER (427 aa). The condensation stretch occupies residues 1325–1477; that stretch reads VQGDWTIEKT…AQSSTPSARK (153 aa).

It belongs to the NRP synthetase family.

The catalysed reaction is L-tryptophan + ATP + H2O = D-tryptophan + AMP + diphosphate + H(+). Its pathway is pigment biosynthesis. Functionally, nonribosomal peptide synthetase; part of the pathway that mediates the biosynthesis of the gray-brown conidiophore pigment. The first step of the pathway is performed by the nonribosomal peptide synthetase ivoA that catalyzes ATP-dependent unidirectional stereoinversion of L-tryptophan to D-tryptophan with complete conversion. While the stereoinversion is catalyzed by the epimerization (E) domain of ivoA, the terminal condensation (C) domain stereoselectively hydrolyzes D-tryptophanyl-S-phosphopantetheine thioester and thus represents a non-canonical C domain function. D-tryptophan is acetylated, probably by an endogenous acetyltransferase. N-acetyltryptophan is further 6-hydroxylated into N-acetyl-6-hydroxytryptophan (AHT) by the cytochrome P450 monooxygenase ivoC. N-acetyl-6-hydroxytryptophan is substrate of the N-acetyl-6-hydroxytryptophan oxidase ivoB to produce the gray-brown conidiophore pigment. This is Nonribosomal peptide synthetase ivoA from Emericella nidulans (strain FGSC A4 / ATCC 38163 / CBS 112.46 / NRRL 194 / M139) (Aspergillus nidulans).